We begin with the raw amino-acid sequence, 256 residues long: Thiazole synthase (256 aa).

Lys95 serves as the catalytic Schiff-base intermediate with DXP. 1-deoxy-D-xylulose 5-phosphate-binding positions include Gly156, 182–183, and 204–205; these read AG and NT.

It belongs to the ThiG family. In terms of assembly, homotetramer. Forms heterodimers with either ThiH or ThiS.

It localises to the cytoplasm. The catalysed reaction is [ThiS sulfur-carrier protein]-C-terminal-Gly-aminoethanethioate + 2-iminoacetate + 1-deoxy-D-xylulose 5-phosphate = [ThiS sulfur-carrier protein]-C-terminal Gly-Gly + 2-[(2R,5Z)-2-carboxy-4-methylthiazol-5(2H)-ylidene]ethyl phosphate + 2 H2O + H(+). The protein operates within cofactor biosynthesis; thiamine diphosphate biosynthesis. Its function is as follows. Catalyzes the rearrangement of 1-deoxy-D-xylulose 5-phosphate (DXP) to produce the thiazole phosphate moiety of thiamine. Sulfur is provided by the thiocarboxylate moiety of the carrier protein ThiS. In vitro, sulfur can be provided by H(2)S. This Shigella boydii serotype 18 (strain CDC 3083-94 / BS512) protein is Thiazole synthase.